The sequence spans 250 residues: Small ribosomal subunit protein uS2 (250 aa).

Residues 225-250 (GAQGGRQARGEDLGAAVEAPSEDALA) form a disordered region.

The protein belongs to the universal ribosomal protein uS2 family.

This Rhizorhabdus wittichii (strain DSM 6014 / CCUG 31198 / JCM 15750 / NBRC 105917 / EY 4224 / RW1) (Sphingomonas wittichii) protein is Small ribosomal subunit protein uS2.